The following is a 216-amino-acid chain: ATP-dependent Clp protease proteolytic subunit (216 aa).

S103 functions as the Nucleophile in the catalytic mechanism. H128 is an active-site residue. Positions 197–216 (RRPALPGDDAPRDVSEGPTP) are disordered.

This sequence belongs to the peptidase S14 family. As to quaternary structure, fourteen ClpP subunits assemble into 2 heptameric rings which stack back to back to give a disk-like structure with a central cavity, resembling the structure of eukaryotic proteasomes.

It is found in the cytoplasm. The enzyme catalyses Hydrolysis of proteins to small peptides in the presence of ATP and magnesium. alpha-casein is the usual test substrate. In the absence of ATP, only oligopeptides shorter than five residues are hydrolyzed (such as succinyl-Leu-Tyr-|-NHMec, and Leu-Tyr-Leu-|-Tyr-Trp, in which cleavage of the -Tyr-|-Leu- and -Tyr-|-Trp bonds also occurs).. In terms of biological role, cleaves peptides in various proteins in a process that requires ATP hydrolysis. Has a chymotrypsin-like activity. Plays a major role in the degradation of misfolded proteins. The polypeptide is ATP-dependent Clp protease proteolytic subunit (Sphingopyxis alaskensis (strain DSM 13593 / LMG 18877 / RB2256) (Sphingomonas alaskensis)).